The following is a 335-amino-acid chain: Biotin synthase (335 aa).

The 228-residue stretch at asparagine 51–arginine 278 folds into the Radical SAM core domain. [4Fe-4S] cluster contacts are provided by cysteine 66, cysteine 70, and cysteine 73. The [2Fe-2S] cluster site is built by cysteine 110, cysteine 141, cysteine 201, and arginine 273.

This sequence belongs to the radical SAM superfamily. Biotin synthase family. In terms of assembly, homodimer. Requires [4Fe-4S] cluster as cofactor. [2Fe-2S] cluster serves as cofactor.

The catalysed reaction is (4R,5S)-dethiobiotin + (sulfur carrier)-SH + 2 reduced [2Fe-2S]-[ferredoxin] + 2 S-adenosyl-L-methionine = (sulfur carrier)-H + biotin + 2 5'-deoxyadenosine + 2 L-methionine + 2 oxidized [2Fe-2S]-[ferredoxin]. The protein operates within cofactor biosynthesis; biotin biosynthesis; biotin from 7,8-diaminononanoate: step 2/2. Functionally, catalyzes the conversion of dethiobiotin (DTB) to biotin by the insertion of a sulfur atom into dethiobiotin via a radical-based mechanism. This Bordetella pertussis (strain Tohama I / ATCC BAA-589 / NCTC 13251) protein is Biotin synthase.